The following is a 164-amino-acid chain: MPPRSLTLSRLPVAALGLPFSSCSPPPPRLRFPFAARRARSLATRASSSSPDSSFGSRMEDSVKRTLADNPVVIYSKSWCSYSMEVKALFKRIGVQPHVIELDQLGAQGPQLQKVLERLTGQSTVPNVFIGGKHIGGCTDTVKLHRKGELATMLSELDIDVNNS.

Residues 60-161 (EDSVKRTLAD…TMLSELDIDV (102 aa)) enclose the Glutaredoxin domain. A [2Fe-2S] cluster-binding site is contributed by cysteine 80.

This sequence belongs to the glutaredoxin family. CPYC subfamily.

It localises to the cytoplasm. May only reduce GSH-thiol disulfides, but not protein disulfides. This Oryza sativa subsp. japonica (Rice) protein is Monothiol glutaredoxin-S10 (GRXS10).